The sequence spans 275 residues: Large ribosomal subunit protein uL2 (275 aa).

The segment at 219–263 (EVRGAAMNPRDHPHGGGEGRAPRGMPTPKTKWGKPARGVKTRHNP) is disordered. Residues 227-239 (PRDHPHGGGEGRA) are compositionally biased toward basic and acidic residues. A compositionally biased stretch (basic residues) spans 249 to 262 (KWGKPARGVKTRHN).

Belongs to the universal ribosomal protein uL2 family. In terms of assembly, part of the 50S ribosomal subunit. Forms a bridge to the 30S subunit in the 70S ribosome.

Functionally, one of the primary rRNA binding proteins. Required for association of the 30S and 50S subunits to form the 70S ribosome, for tRNA binding and peptide bond formation. It has been suggested to have peptidyltransferase activity; this is somewhat controversial. Makes several contacts with the 16S rRNA in the 70S ribosome. This is Large ribosomal subunit protein uL2 from Roseiflexus castenholzii (strain DSM 13941 / HLO8).